We begin with the raw amino-acid sequence, 257 residues long: Imidazole glycerol phosphate synthase subunit HisF (257 aa).

Residues Asp11 and Asp130 contribute to the active site.

The protein belongs to the HisA/HisF family. As to quaternary structure, heterodimer of HisH and HisF.

It localises to the cytoplasm. The enzyme catalyses 5-[(5-phospho-1-deoxy-D-ribulos-1-ylimino)methylamino]-1-(5-phospho-beta-D-ribosyl)imidazole-4-carboxamide + L-glutamine = D-erythro-1-(imidazol-4-yl)glycerol 3-phosphate + 5-amino-1-(5-phospho-beta-D-ribosyl)imidazole-4-carboxamide + L-glutamate + H(+). It participates in amino-acid biosynthesis; L-histidine biosynthesis; L-histidine from 5-phospho-alpha-D-ribose 1-diphosphate: step 5/9. Functionally, IGPS catalyzes the conversion of PRFAR and glutamine to IGP, AICAR and glutamate. The HisF subunit catalyzes the cyclization activity that produces IGP and AICAR from PRFAR using the ammonia provided by the HisH subunit. In Aeromonas salmonicida (strain A449), this protein is Imidazole glycerol phosphate synthase subunit HisF.